We begin with the raw amino-acid sequence, 1040 residues long: Contactin-2 (1040 aa).

The signal sequence occupies residues 1-30; the sequence is MGTATRRKPHLLLVAAVALVSSSAWSSALG. Ig-like C2-type domains are found at residues 43–128, 133–222, 239–322, 327–411, 417–504, and 509–603; these read PLSV…AILR, QEFS…SVFS, PSIK…GRII, PEWL…AELA, PDFR…GILS, and TKIT…ATVL. Intrachain disulfides connect Cys61/Cys111, Cys155/Cys207, Cys261/Cys306, and Cys348/Cys395. Asn76, Asn198, and Asn204 each carry an N-linked (GlcNAc...) asparagine glycan. N-linked (GlcNAc...) asparagine glycans are attached at residues Asn461, Asn477, Asn498, and Asn525. 4 Fibronectin type-III domains span residues 610 to 708, 713 to 810, 815 to 910, and 915 to 1006; these read PPGG…TREA, APSG…SAEE, APTK…TMKP, and PPGN…NGGT. Positions 694–720 are disordered; sequence GEPSGPSSKIRTREAAPSVAPSGLSGG. The short motif at 794–796 is the Cell attachment site element; it reads RGD. N-linked (GlcNAc...) asparagine glycans are attached at residues Asn830, Asn904, Asn918, and Asn940. The tract at residues 894 to 919 is disordered; sequence AGTGPASPSANATTMKPPPRRPPGNI. A lipid anchor (GPI-anchor amidated asparagine) is attached at Asn1012. Residues 1013–1040 constitute a propeptide, removed in mature form; sequence MAVRPAPHPGTVISHSVAMLILIGSLEL.

This sequence belongs to the immunoglobulin superfamily. Contactin family.

The protein localises to the cell membrane. Functionally, in conjunction with another transmembrane protein, CNTNAP2, contributes to the organization of axonal domains at nodes of Ranvier by maintaining voltage-gated potassium channels at the juxtaparanodal region. May be involved in cell adhesion. This Homo sapiens (Human) protein is Contactin-2 (CNTN2).